Reading from the N-terminus, the 677-residue chain is Methionine--tRNA ligase (677 aa).

Positions 15-25 (PYANGSIHLGH) match the 'HIGH' region motif. Zn(2+)-binding residues include C146, C149, C159, and C162. The short motif at 333–337 (KMSKS) is the 'KMSKS' region element. K336 contacts ATP. The 103-residue stretch at 575 to 677 (DFAKVDLRVA…AGAKPGHQVK (103 aa)) folds into the tRNA-binding domain.

It belongs to the class-I aminoacyl-tRNA synthetase family. MetG type 1 subfamily. In terms of assembly, homodimer. The cofactor is Zn(2+).

The protein localises to the cytoplasm. The enzyme catalyses tRNA(Met) + L-methionine + ATP = L-methionyl-tRNA(Met) + AMP + diphosphate. In terms of biological role, is required not only for elongation of protein synthesis but also for the initiation of all mRNA translation through initiator tRNA(fMet) aminoacylation. The chain is Methionine--tRNA ligase from Escherichia coli (strain UTI89 / UPEC).